We begin with the raw amino-acid sequence, 298 residues long: Glycine--tRNA ligase alpha subunit (298 aa).

It belongs to the class-II aminoacyl-tRNA synthetase family. In terms of assembly, tetramer of two alpha and two beta subunits.

It is found in the cytoplasm. The enzyme catalyses tRNA(Gly) + glycine + ATP = glycyl-tRNA(Gly) + AMP + diphosphate. This is Glycine--tRNA ligase alpha subunit from Gloeothece citriformis (strain PCC 7424) (Cyanothece sp. (strain PCC 7424)).